The chain runs to 245 residues: tRNA pseudouridine synthase A (245 aa).

The active-site Nucleophile is aspartate 52. Tyrosine 111 serves as a coordination point for substrate.

This sequence belongs to the tRNA pseudouridine synthase TruA family. As to quaternary structure, homodimer.

It carries out the reaction uridine(38/39/40) in tRNA = pseudouridine(38/39/40) in tRNA. In terms of biological role, formation of pseudouridine at positions 38, 39 and 40 in the anticodon stem and loop of transfer RNAs. The protein is tRNA pseudouridine synthase A of Wolbachia sp. subsp. Drosophila simulans (strain wRi).